The sequence spans 245 residues: Ribonuclease PH (245 aa).

Phosphate contacts are provided by residues R86 and 124-126 (GTR).

Belongs to the RNase PH family. As to quaternary structure, homohexameric ring arranged as a trimer of dimers.

The enzyme catalyses tRNA(n+1) + phosphate = tRNA(n) + a ribonucleoside 5'-diphosphate. In terms of biological role, phosphorolytic 3'-5' exoribonuclease that plays an important role in tRNA 3'-end maturation. Removes nucleotide residues following the 3'-CCA terminus of tRNAs; can also add nucleotides to the ends of RNA molecules by using nucleoside diphosphates as substrates, but this may not be physiologically important. Probably plays a role in initiation of 16S rRNA degradation (leading to ribosome degradation) during starvation. The chain is Ribonuclease PH from Bacillus cereus (strain B4264).